The primary structure comprises 424 residues: Glutamyl-tRNA reductase (424 aa).

Residues 51–54, S99, 104–106, and Q110 contribute to the substrate site; these read TCNR and EDQ. C52 functions as the Nucleophile in the catalytic mechanism. 179 to 184 lines the NADP(+) pocket; that stretch reads GGGEMG.

This sequence belongs to the glutamyl-tRNA reductase family. In terms of assembly, homodimer.

It carries out the reaction (S)-4-amino-5-oxopentanoate + tRNA(Glu) + NADP(+) = L-glutamyl-tRNA(Glu) + NADPH + H(+). The protein operates within porphyrin-containing compound metabolism; protoporphyrin-IX biosynthesis; 5-aminolevulinate from L-glutamyl-tRNA(Glu): step 1/2. Its function is as follows. Catalyzes the NADPH-dependent reduction of glutamyl-tRNA(Glu) to glutamate 1-semialdehyde (GSA). The protein is Glutamyl-tRNA reductase of Methanocorpusculum labreanum (strain ATCC 43576 / DSM 4855 / Z).